We begin with the raw amino-acid sequence, 337 residues long: Molybdate import system permease protein MolB (337 aa).

Residues methionine 1–serine 5 lie on the Cytoplasmic side of the membrane. Residues tyrosine 6–leucine 25 traverse the membrane as a helical segment. Residues glycine 26–aspartate 51 are Periplasmic-facing. Residues proline 52–phenylalanine 87 form a helical membrane-spanning segment. The Cytoplasmic segment spans residues arginine 88–glycine 98. A helical membrane pass occupies residues valine 99–phenylalanine 113. Residues glycine 114 to serine 116 lie on the Periplasmic side of the membrane. A helical membrane pass occupies residues leucine 117–phenylalanine 140. Over lysine 141 to serine 146 the chain is Cytoplasmic. Residues leucine 147–isoleucine 171 form a helical membrane-spanning segment. Over serine 172 to asparagine 193 the chain is Periplasmic. A helical membrane pass occupies residues tryptophan 194–leucine 214. Topologically, residues serine 215–lysine 234 are cytoplasmic. Residues methionine 235–serine 257 traverse the membrane as a helical segment. Over glycine 258–glycine 264 the chain is Periplasmic. A helical transmembrane segment spans residues leucine 265 to valine 275. Residues glycine 276–asparagine 278 are Cytoplasmic-facing. Residues histidine 279–leucine 304 traverse the membrane as a helical segment. Over serine 305–proline 310 the chain is Periplasmic. The helical transmembrane segment at isoleucine 311–lysine 329 threads the bilayer. At leucine 330–glutamate 337 the chain is on the cytoplasmic side.

This sequence belongs to the binding-protein-dependent transport system permease family. FecCD subfamily. In terms of assembly, the complex is composed of two ATP-binding proteins (MolC), two transmembrane proteins (MolB) and a solute-binding protein (MolA).

It localises to the cell inner membrane. The MolBCA complex shows a decrease in affinity in the presence of increasing concentrations of substrate and nucleotide. Functionally, part of the ABC transporter complex MolBCA involved in molybdate import. Responsible for the translocation of the substrate across the membrane. Functions as a low-affinity molybdate transporter. This Haemophilus influenzae (strain ATCC 51907 / DSM 11121 / KW20 / Rd) protein is Molybdate import system permease protein MolB.